Here is a 206-residue protein sequence, read N- to C-terminus: Ribosomal RNA large subunit methyltransferase E (206 aa).

5 residues coordinate S-adenosyl-L-methionine: Gly60, Trp62, Asp80, Asp96, and Asp121. Lys161 serves as the catalytic Proton acceptor.

The protein belongs to the class I-like SAM-binding methyltransferase superfamily. RNA methyltransferase RlmE family.

The protein localises to the cytoplasm. It carries out the reaction uridine(2552) in 23S rRNA + S-adenosyl-L-methionine = 2'-O-methyluridine(2552) in 23S rRNA + S-adenosyl-L-homocysteine + H(+). Specifically methylates the uridine in position 2552 of 23S rRNA at the 2'-O position of the ribose in the fully assembled 50S ribosomal subunit. This chain is Ribosomal RNA large subunit methyltransferase E, found in Stutzerimonas stutzeri (strain A1501) (Pseudomonas stutzeri).